The primary structure comprises 250 residues: 4-hydroxy-tetrahydrodipicolinate reductase (250 aa).

NAD(+)-binding positions include 10 to 15 (GVKGRI), 78 to 80 (GTT), and 105 to 108 (APNF). Residue His-135 is the Proton donor/acceptor of the active site. A (S)-2,3,4,5-tetrahydrodipicolinate-binding site is contributed by His-136. Lys-139 functions as the Proton donor in the catalytic mechanism. (S)-2,3,4,5-tetrahydrodipicolinate is bound at residue 145–146 (GT).

This sequence belongs to the DapB family.

It is found in the cytoplasm. The catalysed reaction is (S)-2,3,4,5-tetrahydrodipicolinate + NAD(+) + H2O = (2S,4S)-4-hydroxy-2,3,4,5-tetrahydrodipicolinate + NADH + H(+). It carries out the reaction (S)-2,3,4,5-tetrahydrodipicolinate + NADP(+) + H2O = (2S,4S)-4-hydroxy-2,3,4,5-tetrahydrodipicolinate + NADPH + H(+). It participates in amino-acid biosynthesis; L-lysine biosynthesis via DAP pathway; (S)-tetrahydrodipicolinate from L-aspartate: step 4/4. In terms of biological role, catalyzes the conversion of 4-hydroxy-tetrahydrodipicolinate (HTPA) to tetrahydrodipicolinate. The polypeptide is 4-hydroxy-tetrahydrodipicolinate reductase (Streptomyces avermitilis (strain ATCC 31267 / DSM 46492 / JCM 5070 / NBRC 14893 / NCIMB 12804 / NRRL 8165 / MA-4680)).